A 440-amino-acid polypeptide reads, in one-letter code: C4-dicarboxylate transport protein (440 aa).

8 helical membrane passes run 8 to 28, 40 to 60, 74 to 94, 147 to 167, 187 to 207, 221 to 241, 288 to 308, and 354 to 374; these read LYLQ…LFPA, FIKL…VTGI, LKGL…GLVV, GDIL…AALK, IVGF…AFTV, LIAC…GLVL, VVGL…SIYL, and AATL…LLGV. Positions 419–440 are disordered; sequence EEVEPANEPEPPAVPAGAGLHG.

The protein belongs to the dicarboxylate/amino acid:cation symporter (DAACS) (TC 2.A.23) family.

The protein resides in the cell inner membrane. Functionally, responsible for the transport of dicarboxylates such as succinate, fumarate, and malate from the periplasm across the membrane. The sequence is that of C4-dicarboxylate transport protein from Anaeromyxobacter dehalogenans (strain 2CP-1 / ATCC BAA-258).